The sequence spans 208 residues: Small ribosomal subunit protein uS2 (208 aa).

Belongs to the universal ribosomal protein uS2 family.

The chain is Small ribosomal subunit protein uS2 from Pyrobaculum calidifontis (strain DSM 21063 / JCM 11548 / VA1).